The chain runs to 331 residues: Phosphate acyltransferase (331 aa).

Belongs to the PlsX family. Homodimer. Probably interacts with PlsY.

The protein resides in the cytoplasm. It carries out the reaction a fatty acyl-[ACP] + phosphate = an acyl phosphate + holo-[ACP]. It participates in lipid metabolism; phospholipid metabolism. In terms of biological role, catalyzes the reversible formation of acyl-phosphate (acyl-PO(4)) from acyl-[acyl-carrier-protein] (acyl-ACP). This enzyme utilizes acyl-ACP as fatty acyl donor, but not acyl-CoA. In Ureaplasma parvum serovar 3 (strain ATCC 27815 / 27 / NCTC 11736), this protein is Phosphate acyltransferase.